Reading from the N-terminus, the 394-residue chain is Elongation factor Tu (394 aa).

Positions 10 to 204 constitute a tr-type G domain; the sequence is KPHVNVGTIG…AVDEWIPTPE (195 aa). Residues 19–26 form a G1 region; it reads GHIDHGKT. Residue 19–26 coordinates GTP; that stretch reads GHIDHGKT. Thr-26 is a binding site for Mg(2+). The interval 60–64 is G2; that stretch reads GITIN. The G3 stretch occupies residues 81–84; it reads DCPG. GTP contacts are provided by residues 81–85 and 136–139; these read DCPGH and NKCD. The tract at residues 136-139 is G4; the sequence is NKCD. The interval 174–176 is G5; the sequence is SAL.

It belongs to the TRAFAC class translation factor GTPase superfamily. Classic translation factor GTPase family. EF-Tu/EF-1A subfamily. Monomer.

The protein resides in the cytoplasm. It carries out the reaction GTP + H2O = GDP + phosphate + H(+). Functionally, GTP hydrolase that promotes the GTP-dependent binding of aminoacyl-tRNA to the A-site of ribosomes during protein biosynthesis. The polypeptide is Elongation factor Tu (Mycoplasma pneumoniae (strain ATCC 29342 / M129 / Subtype 1) (Mycoplasmoides pneumoniae)).